The primary structure comprises 211 residues: uncharacterized protein (211 aa).

Composition is skewed to low complexity over residues 1–19 and 61–74; these read MQDPHVPSSPTISSVSSSD and SPSVAISRASSSNA. Disordered regions lie at residues 1–27 and 54–94; these read MQDPHVPSSPTISSVSSSDLDTESTGS and ASSR…EPHR.

In terms of assembly, interacts with RLK902. Expressed in inflorescences, stems, rosette leaves and weakly in roots.

This is an uncharacterized protein from Arabidopsis thaliana (Mouse-ear cress).